Reading from the N-terminus, the 128-residue chain is MAYRKLGRTSSQRKAMLRDLTTDLLINESIVTTEARAKEIRKTVEKMITLGKRGDLHARRQAAAFVRNEIASENYDEATDKYTSTSALQKLFNEIAPRYAERNGGYTRILKTEPRRGDAAPMAIIELV.

The protein belongs to the bacterial ribosomal protein bL17 family. As to quaternary structure, part of the 50S ribosomal subunit. Contacts protein L32.

The polypeptide is Large ribosomal subunit protein bL17 (Streptococcus uberis (strain ATCC BAA-854 / 0140J)).